We begin with the raw amino-acid sequence, 467 residues long: Coiled-coil domain-containing protein 174 (467 aa).

Disordered stretches follow at residues 40 to 77 (VFGK…EEQK) and 124 to 162 (EMEA…SEEW). Residues 63–99 (NRAEKDAEQKIEEQKTLDKAREKLEEKAKLYEKMTKG) adopt a coiled-coil conformation. Composition is skewed to basic and acidic residues over residues 64-77 (RAEK…EEQK) and 124-139 (EMEA…KAGE). S197 is modified (phosphoserine). Residues 267 to 309 (LEMLREQTTDQRTKRENIKEKRKAILEARLAKLRQKKMKKSKE) adopt a coiled-coil conformation. 2 disordered regions span residues 299–363 (LRQK…HIRE) and 378–453 (RQSD…TVTF). A compositionally biased stretch (pro residues) spans 324–336 (PLPPEPEAVPTPR). Composition is skewed to basic and acidic residues over residues 348–363 (VQER…HIRE) and 378–389 (RQSDLRAERDPE). A compositionally biased stretch (polar residues) spans 425–437 (PDQSHGPSPEHTS). The segment covering 439 to 448 (TPAPDNPPQA) has biased composition (pro residues).

Widely expressed.

The protein localises to the nucleus. Its function is as follows. Probably involved in neuronal development. The protein is Coiled-coil domain-containing protein 174 (CCDC174) of Homo sapiens (Human).